A 125-amino-acid chain; its full sequence is Large ribosomal subunit protein bL12 (125 aa).

It belongs to the bacterial ribosomal protein bL12 family. As to quaternary structure, homodimer. Part of the ribosomal stalk of the 50S ribosomal subunit. Forms a multimeric L10(L12)X complex, where L10 forms an elongated spine to which 2 to 4 L12 dimers bind in a sequential fashion. Binds GTP-bound translation factors.

Forms part of the ribosomal stalk which helps the ribosome interact with GTP-bound translation factors. Is thus essential for accurate translation. The chain is Large ribosomal subunit protein bL12 from Cereibacter sphaeroides (strain ATCC 17023 / DSM 158 / JCM 6121 / CCUG 31486 / LMG 2827 / NBRC 12203 / NCIMB 8253 / ATH 2.4.1.) (Rhodobacter sphaeroides).